Here is a 555-residue protein sequence, read N- to C-terminus: CTL-like protein DDB_G0274487 (555 aa).

A compositionally biased stretch (polar residues) spans 1 to 17 (MGIEDNSQQPNTGSPYG). Residues 1 to 101 (MGIEDNSQQP…NLNKANDRES (101 aa)) form a disordered region. Low complexity predominate over residues 19–63 (SPPSQYNPYGQQPPQQQQYNPYGEQQQQPQQQQQYGYQPQFQPTY). Residues 79-90 (PFPPQQQQPPPI) show a composition bias toward pro residues. Asn-116 is a glycosylation site (N-linked (GlcNAc...) asparagine). The chain crosses the membrane as a helical span at residues 138–158 (IWFSILFGLNFGLLIVVSASA). Asn-174 is a glycosylation site (N-linked (GlcNAc...) asparagine). The next 10 membrane-spanning stretches (helical) occupy residues 182–202 (FLFA…WAWL), 210–230 (ESLI…YCVF), 231–251 (FFVW…FFII), 284–304 (AGYV…SAFA), 313–333 (AIQT…FHVI), 340–360 (TVSG…VGMP), 372–392 (LTTS…IETL), 405–425 (VVVK…SSIV), 472–492 (IAIG…LISI), and 493–513 (PFDM…LVII).

It belongs to the CTL (choline transporter-like) family.

Its subcellular location is the membrane. The chain is CTL-like protein DDB_G0274487 from Dictyostelium discoideum (Social amoeba).